Reading from the N-terminus, the 365-residue chain is tRNA/tmRNA (uracil-C(5))-methyltransferase (365 aa).

Residues glutamine 189, tyrosine 217, asparagine 222, glutamate 238, and aspartate 298 each contribute to the S-adenosyl-L-methionine site. Cysteine 323 serves as the catalytic Nucleophile. Glutamate 357 serves as the catalytic Proton acceptor.

The protein belongs to the class I-like SAM-binding methyltransferase superfamily. RNA M5U methyltransferase family. TrmA subfamily.

The enzyme catalyses uridine(54) in tRNA + S-adenosyl-L-methionine = 5-methyluridine(54) in tRNA + S-adenosyl-L-homocysteine + H(+). It carries out the reaction uridine(341) in tmRNA + S-adenosyl-L-methionine = 5-methyluridine(341) in tmRNA + S-adenosyl-L-homocysteine + H(+). In terms of biological role, dual-specificity methyltransferase that catalyzes the formation of 5-methyluridine at position 54 (m5U54) in all tRNAs, and that of position 341 (m5U341) in tmRNA (transfer-mRNA). This is tRNA/tmRNA (uracil-C(5))-methyltransferase from Shewanella sp. (strain ANA-3).